Here is a 146-residue protein sequence, read N- to C-terminus: Ecotin-like protein 1 (146 aa).

It belongs to the protease inhibitor I11 (ecotin) family.

The sequence is that of Ecotin-like protein 1 (ISP1) from Leishmania braziliensis.